Reading from the N-terminus, the 541-residue chain is Transmembrane protein 151 homolog (541 aa).

Helical transmembrane passes span 27–47, 73–93, and 254–274; these read GYGK…YATF, YNFV…MECW, and PWFL…SWPL. A disordered region spans residues 503-541; the sequence is ASISHSSSKDLKSLTLKSSSSNNNNNNSNNNNNDDPEHP. Low complexity predominate over residues 515 to 535; sequence SLTLKSSSSNNNNNNSNNNNN.

It belongs to the TMEM151 family.

The protein localises to the membrane. The polypeptide is Transmembrane protein 151 homolog (Caenorhabditis elegans).